Consider the following 349-residue polypeptide: Isopentenyl-diphosphate delta-isomerase (349 aa).

Substrate is bound at residue 9-10 (RK). Residues 65 to 67 (AMT), Ser95, and Asn124 contribute to the FMN site. Residue 95–97 (STH) coordinates substrate. Substrate is bound at residue Gln154. Residue Glu155 participates in Mg(2+) binding. FMN is bound by residues Lys186, Ser211, Thr216, 262 to 264 (GLR), and 283 to 284 (SR).

Belongs to the IPP isomerase type 2 family. In terms of assembly, homooctamer. Dimer of tetramers. FMN is required as a cofactor. The cofactor is NADPH. Requires Mg(2+) as cofactor.

The protein localises to the cytoplasm. The enzyme catalyses isopentenyl diphosphate = dimethylallyl diphosphate. Functionally, involved in the biosynthesis of isoprenoids. Catalyzes the 1,3-allylic rearrangement of the homoallylic substrate isopentenyl (IPP) to its allylic isomer, dimethylallyl diphosphate (DMAPP). The protein is Isopentenyl-diphosphate delta-isomerase of Staphylococcus aureus (strain MSSA476).